The sequence spans 223 residues: Thiamine-phosphate synthase (223 aa).

4-amino-2-methyl-5-(diphosphooxymethyl)pyrimidine contacts are provided by residues 42–46 (QLRDK) and Asn-83. Residues Asp-84 and Asp-103 each contribute to the Mg(2+) site. 4-amino-2-methyl-5-(diphosphooxymethyl)pyrimidine is bound at residue Ser-122. Residue 148–150 (TPT) participates in 2-[(2R,5Z)-2-carboxy-4-methylthiazol-5(2H)-ylidene]ethyl phosphate binding. 4-amino-2-methyl-5-(diphosphooxymethyl)pyrimidine is bound at residue Lys-151. Gly-179 contacts 2-[(2R,5Z)-2-carboxy-4-methylthiazol-5(2H)-ylidene]ethyl phosphate.

The protein belongs to the thiamine-phosphate synthase family. It depends on Mg(2+) as a cofactor.

The catalysed reaction is 2-[(2R,5Z)-2-carboxy-4-methylthiazol-5(2H)-ylidene]ethyl phosphate + 4-amino-2-methyl-5-(diphosphooxymethyl)pyrimidine + 2 H(+) = thiamine phosphate + CO2 + diphosphate. The enzyme catalyses 2-(2-carboxy-4-methylthiazol-5-yl)ethyl phosphate + 4-amino-2-methyl-5-(diphosphooxymethyl)pyrimidine + 2 H(+) = thiamine phosphate + CO2 + diphosphate. It catalyses the reaction 4-methyl-5-(2-phosphooxyethyl)-thiazole + 4-amino-2-methyl-5-(diphosphooxymethyl)pyrimidine + H(+) = thiamine phosphate + diphosphate. It participates in cofactor biosynthesis; thiamine diphosphate biosynthesis; thiamine phosphate from 4-amino-2-methyl-5-diphosphomethylpyrimidine and 4-methyl-5-(2-phosphoethyl)-thiazole: step 1/1. In terms of biological role, condenses 4-methyl-5-(beta-hydroxyethyl)thiazole monophosphate (THZ-P) and 2-methyl-4-amino-5-hydroxymethyl pyrimidine pyrophosphate (HMP-PP) to form thiamine monophosphate (TMP). This chain is Thiamine-phosphate synthase, found in Mycobacterium avium (strain 104).